Reading from the N-terminus, the 643-residue chain is Enzymatic polyprotein (643 aa).

The Peptidase A3A domain maps to 6 to 209; that stretch reads NPNATFITVK…KEVNVPNNIP (204 aa). Aspartate 26 acts as the For protease activity in catalysis. The Reverse transcriptase domain maps to 226–410; it reads VRKGIIEESK…QTIDFLGLTL (185 aa). Positions 296, 360, and 361 each coordinate Mg(2+).

Belongs to the caulimoviridae enzymatic polyprotein family.

It catalyses the reaction DNA(n) + a 2'-deoxyribonucleoside 5'-triphosphate = DNA(n+1) + diphosphate. Functionally, encodes for at least two polypeptides: protease (PR) and reverse transcriptase (RT). The protease processes the polyprotein in cis. Reverse transcriptase is multifunctional enzyme that converts the viral RNA genome into dsDNA in viral cytoplasmic capsids. This enzyme displays a DNA polymerase activity that can copy either DNA or RNA templates, and a ribonuclease H (RNase H) activity that cleaves the RNA strand of RNA-DNA heteroduplexes in a partially processive 3'- to 5'-endonucleasic mode. Neo-synthesized pregenomic RNA (pgRNA) are encapsidated, and reverse-transcribed inside the nucleocapsid. Partial (+)DNA is synthesized from the (-)DNA template and generates the relaxed circular DNA (RC-DNA) genome. After budding and infection, the RC-DNA migrates in the nucleus, and is converted into a plasmid-like covalently closed circular DNA (cccDNA). This chain is Enzymatic polyprotein, found in Cestrum parqui (CmYLCV).